A 533-amino-acid polypeptide reads, in one-letter code: MAVAGAMVMSGGVLLLLLAFTCAAYNDAGELPPISRRSFPKGFIFGTSSSSYQFEGAAAKGGRGPSIWDTFTHQYPDKITDKSNGDGACNSYHLYKEDVRIMKEMGMDAYRFSISWSRILPNGSLSGGVNREGINYYNNLINELLSKEVQPFATLFHFDTPQALEDKYKGFLSPNIINDYKDYAEICFKEFGDRVKHWITFNEPWNFCSMGYASGTMAPGRCSSWEKGKCRVGDSGREPYTACHHQLLAHAETVRLYKEKYQFTEEAIRQSPFIRDNNLNRRSAKALQKGRIGIILNSEWFVPFSQSKSSNDAARRVLDFMLGWFMDPLIRGDYPLSMRELVGNRLPEFSKEQSEMVKGAFDFIGLNYYASSYADNDPPSYGHNNSYNTDSHAKITGSRNGIPIGPQAASFWFYIYPEGLRELLLHIKENYGNPTIYITENGVDEINNKTMRLKEALKDDIRIEYYHKHLLALLSAMRDGANVKGYFAWSLLDNFEWSEGYTVRFGINFVDYDNGMKRYPKNSARWFKKFLRK.

Residues 1 to 23 form the signal peptide; it reads MAVAGAMVMSGGVLLLLLAFTCA. Residue glutamine 53 coordinates a beta-D-glucoside. Asparagine 122 is a glycosylation site (N-linked (GlcNAc...) asparagine). A beta-D-glucoside-binding positions include histidine 157 and 202 to 203; that span reads NE. Glutamate 203 acts as the Proton donor in catalysis. Cysteine 222 and cysteine 230 form a disulfide bridge. Tyrosine 369 lines the a beta-D-glucoside pocket. N-linked (GlcNAc...) asparagine glycosylation occurs at asparagine 384. A beta-D-glucoside is bound at residue glutamate 440. Residue glutamate 440 is the Nucleophile of the active site. Asparagine 448 is a glycosylation site (N-linked (GlcNAc...) asparagine). Residues tryptophan 489, 496-497, and phenylalanine 505 each bind a beta-D-glucoside; that span reads EW.

This sequence belongs to the glycosyl hydrolase 1 family.

The catalysed reaction is Hydrolysis of terminal, non-reducing beta-D-glucosyl residues with release of beta-D-glucose.. This Oryza sativa subsp. japonica (Rice) protein is Beta-glucosidase 10 (BGLU10).